A 417-amino-acid chain; its full sequence is Serine hydroxymethyltransferase (417 aa).

Residues L121 and 125–127 (GHL) contribute to the (6S)-5,6,7,8-tetrahydrofolate site. N6-(pyridoxal phosphate)lysine is present on K229. Position 355–357 (355–357 (SPF)) interacts with (6S)-5,6,7,8-tetrahydrofolate.

Belongs to the SHMT family. As to quaternary structure, homodimer. It depends on pyridoxal 5'-phosphate as a cofactor.

It localises to the cytoplasm. It catalyses the reaction (6R)-5,10-methylene-5,6,7,8-tetrahydrofolate + glycine + H2O = (6S)-5,6,7,8-tetrahydrofolate + L-serine. It participates in one-carbon metabolism; tetrahydrofolate interconversion. Its pathway is amino-acid biosynthesis; glycine biosynthesis; glycine from L-serine: step 1/1. Catalyzes the reversible interconversion of serine and glycine with tetrahydrofolate (THF) serving as the one-carbon carrier. This reaction serves as the major source of one-carbon groups required for the biosynthesis of purines, thymidylate, methionine, and other important biomolecules. Also exhibits THF-independent aldolase activity toward beta-hydroxyamino acids, producing glycine and aldehydes, via a retro-aldol mechanism. This is Serine hydroxymethyltransferase from Sodalis glossinidius (strain morsitans).